The following is a 1567-amino-acid chain: Myosin-2A (1567 aa).

Residues 4–57 (EVGTRCWYPSKEQGWIGAEVTKNDLKDGTYFMELTLEDNEVVNVETKDLTNEKD) form the Myosin N-terminal SH3-like domain. The Myosin motor domain occupies 70–786 (ESTEDLTTLS…MLAYFEKLRS (717 aa)). ATP is bound at residue 164–171 (GESGAGKT). Positions 446-526 (FIGVLDIYGF…LGILSLLDEE (81 aa)) are actin-binding. The segment at 619 to 640 (EEAKKNAASQDQKQLKKPTPIR) is disordered. IQ domains are found at residues 789-818 (MNSA…SLSL), 812-836 (MKAS…EYEL), 837-859 (EQHA…YISG), 860-884 (VISS…QSKY), 885-907 (ESNA…AYES), and 908-937 (KRRD…DAKS). Residues 947-1091 (KLENKVIQLT…LAHLQTSIAL (145 aa)) adopt a coiled-coil conformation. A non alpha-helical, tail domain region spans residues 1092 to 1567 (GTVTTNTNIV…VAQQVTVPDA (476 aa)). In terms of domain architecture, Dilute spans 1230-1505 (AQVLTTIQKV…LKYVADIVKK (276 aa)).

The protein belongs to the TRAFAC class myosin-kinesin ATPase superfamily. Myosin family. Homodimer. Interacts with calmodulin (CMD1) and the myosin light chain MLC1 through its IQ repeats.

Its function is as follows. Myosin heavy chain that is required for the cell cycle-regulated transport of various organelles and proteins for their segregation. Functions by binding with its tail domain to receptor proteins on organelles and exerting force with its N-terminal motor domain against actin filaments, thereby transporting its cargo along polarized actin cables. The polypeptide is Myosin-2A (MYO2A) (Naumovozyma castellii (Yeast)).